Reading from the N-terminus, the 616-residue chain is Dihydroxy-acid dehydratase (616 aa).

Position 81 (aspartate 81) interacts with Mg(2+). Residue cysteine 122 participates in [2Fe-2S] cluster binding. Mg(2+)-binding residues include aspartate 123 and lysine 124. Lysine 124 bears the N6-carboxylysine mark. [2Fe-2S] cluster is bound at residue cysteine 195. Glutamate 491 provides a ligand contact to Mg(2+). Residue serine 517 is the Proton acceptor of the active site.

Belongs to the IlvD/Edd family. As to quaternary structure, homodimer. It depends on [2Fe-2S] cluster as a cofactor. Mg(2+) is required as a cofactor.

The catalysed reaction is (2R)-2,3-dihydroxy-3-methylbutanoate = 3-methyl-2-oxobutanoate + H2O. It carries out the reaction (2R,3R)-2,3-dihydroxy-3-methylpentanoate = (S)-3-methyl-2-oxopentanoate + H2O. It participates in amino-acid biosynthesis; L-isoleucine biosynthesis; L-isoleucine from 2-oxobutanoate: step 3/4. Its pathway is amino-acid biosynthesis; L-valine biosynthesis; L-valine from pyruvate: step 3/4. Its function is as follows. Functions in the biosynthesis of branched-chain amino acids. Catalyzes the dehydration of (2R,3R)-2,3-dihydroxy-3-methylpentanoate (2,3-dihydroxy-3-methylvalerate) into 2-oxo-3-methylpentanoate (2-oxo-3-methylvalerate) and of (2R)-2,3-dihydroxy-3-methylbutanoate (2,3-dihydroxyisovalerate) into 2-oxo-3-methylbutanoate (2-oxoisovalerate), the penultimate precursor to L-isoleucine and L-valine, respectively. In Shigella boydii serotype 4 (strain Sb227), this protein is Dihydroxy-acid dehydratase.